Consider the following 1283-residue polypeptide: 5-oxoprolinase PfmaA (1283 aa).

The segment at N1256–I1283 is disordered. Residues P1266 to D1277 show a composition bias toward basic and acidic residues.

The protein belongs to the oxoprolinase family. As to quaternary structure, homodimer.

The catalysed reaction is 5-oxo-L-proline + ATP + 2 H2O = L-glutamate + ADP + phosphate + H(+). Its function is as follows. 5-oxoprolinase; part of the gene cluster that mediates the biosynthesis of dihydroxynaphthalene (DHN)-melanin, a bluish-green pigment forming a dark layer in the conidial wall that protects the conidia from UV radiations. The first step of the pathway is the production of the pentaketide 1,3,6,8-tetrahydroxynaphthalene (1,3,6,8-THN or T4HN) by the polyketide synthase PfmaE though condensation of acetyl-CoA with malonyl-CoA. T4HN is not stable and easily oxidizes into the stable form flaviolin. T4HN is also substrate of the hydroxynaphthalene reductase PfmaG to yield scytalone. The scytalone dehydratase PfmaJ then reduces scytalone to 1,3,8-THN. 1,3,8-THN is then substrate of the hydroxynaphthalene reductase PfmaI to yield vermelone. Vermelone is further converted by the multicopper oxidase PfmaD to 1,8-DHN. Finally the laccase PFICI_06862 transforms 1,8-DHN to DHN-melanin. The roles of the 5-oxoprolinase PfmaA and the proline iminopeptidase PfmaB within the cluster have not been elucidated yet. This Pestalotiopsis fici (strain W106-1 / CGMCC3.15140) protein is 5-oxoprolinase PfmaA.